The chain runs to 530 residues: Dual specificity calcium/calmodulin-dependent 3',5'-cyclic nucleotide phosphodiesterase 1A (530 aa).

Calmodulin-binding stretches follow at residues threonine 24–lysine 44 and glutamate 114–lysine 137. Residues valine 142–glycine 508 enclose the PDEase domain. The Proton donor role is filled by histidine 219. The Zn(2+) site is built by histidine 223, histidine 259, aspartate 260, and aspartate 366. Aspartate 260 lines the Mg(2+) pocket. Disordered stretches follow at residues threonine 450–threonine 471 and lysine 502–serine 530. The span at lysine 451–threonine 471 shows a compositional bias: polar residues. Residues proline 510 to serine 530 are compositionally biased toward basic and acidic residues.

This sequence belongs to the cyclic nucleotide phosphodiesterase family. PDE1 subfamily. Homodimer. Interacts with YWHAZ. Zn(2+) serves as cofactor. The cofactor is Mg(2+).

It catalyses the reaction a nucleoside 3',5'-cyclic phosphate + H2O = a nucleoside 5'-phosphate + H(+). It carries out the reaction 3',5'-cyclic GMP + H2O = GMP + H(+). The enzyme catalyses 3',5'-cyclic AMP + H2O = AMP + H(+). Its activity is regulated as follows. Type I PDE are activated by the binding of calmodulin in the presence of Ca(2+). Calcium/calmodulin-dependent cyclic nucleotide phosphodiesterase with a dual specificity for the second messengers cGMP and cAMP, which are key regulators of many important physiological processes. Has a higher efficiency with cGMP compared to cAMP. The chain is Dual specificity calcium/calmodulin-dependent 3',5'-cyclic nucleotide phosphodiesterase 1A from Bos taurus (Bovine).